A 192-amino-acid chain; its full sequence is A-type ATP synthase subunit E (192 aa).

This sequence belongs to the V-ATPase E subunit family. As to quaternary structure, has multiple subunits with at least A(3), B(3), C, D, E, F, H, I and proteolipid K(x).

Its subcellular location is the cell membrane. Its function is as follows. Component of the A-type ATP synthase that produces ATP from ADP in the presence of a proton gradient across the membrane. This is A-type ATP synthase subunit E from Sulfolobus acidocaldarius (strain ATCC 33909 / DSM 639 / JCM 8929 / NBRC 15157 / NCIMB 11770).